We begin with the raw amino-acid sequence, 428 residues long: Immunoglobulin superfamily containing leucine-rich repeat protein (428 aa).

Residues 1 to 18 form the signal peptide; the sequence is MQELHLLWWALLLGLAQA. Residues 19-50 enclose the LRRNT domain; it reads CPEPCDCGEKYGFQIADCAYRDLESVPPGFPA. Asn51 is a glycosylation site (N-linked (GlcNAc...) asparagine). LRR repeat units lie at residues 51-72, 75-96, 99-122, 123-144, and 147-168; these read NVTTLSLSANRLPGLPEGAFRE, LLQSLWLAHNEIRTVAAGALAS, HLKSLDLSHNLISDFAWSDLHNLS, ALQLLKMDSNELTFIPRDAFRS, and ALRSLQLNHNRLHTLAEGTFTP. An LRRCT domain is found at 180–231; the sequence is NPFDCTCGIVWLKTWALTTAVSIPEQDNIACTSPHVLKGTPLSRLPPLPCSA. In terms of domain architecture, Ig-like spans 232–343; the sequence is PSVQLSYQPS…GSAESSVDVA (112 aa). A disulfide bridge connects residues Cys257 and Cys327. N-linked (GlcNAc...) asparagine glycosylation is present at Asn309.

Expressed in various tissues including retina, heart, skeletal muscle, prostate, ovary, small intestine, thyroid, adrenal cortex, testis, stomach and spinal cord.

Its subcellular location is the secreted. The sequence is that of Immunoglobulin superfamily containing leucine-rich repeat protein (ISLR) from Homo sapiens (Human).